The chain runs to 611 residues: Developmental and secondary metabolism regulator veA (611 aa).

Disordered stretches follow at residues 1–57, 222–497, and 511–611; these read MNRK…RPVD, RRRE…ASFD, and LEAS…PGHA. Polar residues predominate over residues 14–23; the sequence is KSSATRTTND. A Velvet domain is found at 24-216; sequence GRAITYEMQV…AEQGCRVRIR (193 aa). A Nuclear localization signal motif is present at residues 38 to 43; that stretch reads QRARAC. The span at 242-254 shows a compositional bias: low complexity; it reads AARARASATPDPS. A compositionally biased stretch (polar residues) spans 274–290; sequence SASNASHQSLGSISRRP. A compositionally biased stretch (low complexity) spans 330-340; that stretch reads YPPNQFVQQQP. The segment covering 341–361 has biased composition (pro residues); it reads PMQPPLPQYQPPNYPAPPPPV. A compositionally biased stretch (low complexity) spans 362–377; the sequence is TAAQQPQPAQSYYNYP. Over residues 419–434 the composition is skewed to polar residues; it reads RNSQQIPPTSQPTAYT. Low complexity-rich tracts occupy residues 435 to 452 and 461 to 471; these read QPMQPQYAAQMPPAQHYQ and QASQHSSYSSM. The interval 455 to 499 is PEST; it reads PPPPPSQASQHSSYSSMDLYNSRPAPIEPHHHGNTPASKASFDLP. Residues 511–533 show a composition bias toward polar residues; that stretch reads LEASSPTSVAPTNAYFSGGQTPI.

It belongs to the velvet family. VeA subfamily. Component of the heterotrimeric velvet complex composed of laeA, veA and velB; VeA acting as a bridging protein between laeA and velB.

Its subcellular location is the nucleus. It localises to the cytoplasm. Functionally, component of the velvet transcription factor complex that controls sexual/asexual developmental ratio in response to light, promoting sexual development in the darkness while stimulating asexual sporulation under illumination. The velvet complex hat acts as a global regulator for secondary metabolite gene expression. Controls the expression of the dothistromin gene cluster. Regulates hyphal growth and pigment formation. Acts as a positive regulator of virulence. The protein is Developmental and secondary metabolism regulator veA of Dothistroma septosporum (strain NZE10 / CBS 128990) (Red band needle blight fungus).